We begin with the raw amino-acid sequence, 676 residues long: tRNA 5-methylaminomethyl-2-thiouridine biosynthesis bifunctional protein MnmC (676 aa).

The tRNA (mnm(5)s(2)U34)-methyltransferase stretch occupies residues 1–241 (MFTVTPAKIY…KRECLCGIKN (241 aa)). Residues 268–676 (IGGGIASLFT…RKLLKGTEIK (409 aa)) are FAD-dependent cmnm(5)s(2)U34 oxidoreductase.

It in the N-terminal section; belongs to the methyltransferase superfamily. tRNA (mnm(5)s(2)U34)-methyltransferase family. In the C-terminal section; belongs to the DAO family. Requires FAD as cofactor.

Its subcellular location is the cytoplasm. It catalyses the reaction 5-aminomethyl-2-thiouridine(34) in tRNA + S-adenosyl-L-methionine = 5-methylaminomethyl-2-thiouridine(34) in tRNA + S-adenosyl-L-homocysteine + H(+). Its function is as follows. Catalyzes the last two steps in the biosynthesis of 5-methylaminomethyl-2-thiouridine (mnm(5)s(2)U) at the wobble position (U34) in tRNA. Catalyzes the FAD-dependent demodification of cmnm(5)s(2)U34 to nm(5)s(2)U34, followed by the transfer of a methyl group from S-adenosyl-L-methionine to nm(5)s(2)U34, to form mnm(5)s(2)U34. The chain is tRNA 5-methylaminomethyl-2-thiouridine biosynthesis bifunctional protein MnmC from Histophilus somni (strain 129Pt) (Haemophilus somnus).